A 71-amino-acid chain; its full sequence is Exodeoxyribonuclease 7 small subunit (71 aa).

The protein belongs to the XseB family. Heterooligomer composed of large and small subunits.

The protein resides in the cytoplasm. The enzyme catalyses Exonucleolytic cleavage in either 5'- to 3'- or 3'- to 5'-direction to yield nucleoside 5'-phosphates.. In terms of biological role, bidirectionally degrades single-stranded DNA into large acid-insoluble oligonucleotides, which are then degraded further into small acid-soluble oligonucleotides. This Clostridium botulinum (strain 657 / Type Ba4) protein is Exodeoxyribonuclease 7 small subunit.